Reading from the N-terminus, the 417-residue chain is Serine/threonine-protein kinase PkaB (417 aa).

The Protein kinase domain maps to Tyr-9 to Leu-270. ATP-binding positions include Leu-15–Val-23 and Lys-36. The active-site Proton acceptor is Asp-130. Disordered regions lie at residues Leu-279 to Thr-371 and Leu-395 to Pro-417. The segment covering Asp-280–Pro-293 has biased composition (acidic residues). Low complexity-rich tracts occupy residues Asp-294 to Glu-308 and Gly-349 to Arg-368. Positions Asp-408–Pro-417 are enriched in polar residues.

The protein belongs to the protein kinase superfamily. Ser/Thr protein kinase family. Post-translationally, autophosphorylated mainly at Thr.

It catalyses the reaction L-seryl-[protein] + ATP = O-phospho-L-seryl-[protein] + ADP + H(+). The enzyme catalyses L-threonyl-[protein] + ATP = O-phospho-L-threonyl-[protein] + ADP + H(+). The protein is Serine/threonine-protein kinase PkaB (pkaB) of Streptomyces coelicolor (strain ATCC BAA-471 / A3(2) / M145).